The following is an 886-amino-acid chain: Alanine--tRNA ligase (886 aa).

4 residues coordinate Zn(2+): His-570, His-574, Cys-673, and His-677.

This sequence belongs to the class-II aminoacyl-tRNA synthetase family. It depends on Zn(2+) as a cofactor.

The protein resides in the cytoplasm. It catalyses the reaction tRNA(Ala) + L-alanine + ATP = L-alanyl-tRNA(Ala) + AMP + diphosphate. Functionally, catalyzes the attachment of alanine to tRNA(Ala) in a two-step reaction: alanine is first activated by ATP to form Ala-AMP and then transferred to the acceptor end of tRNA(Ala). Also edits incorrectly charged Ser-tRNA(Ala) and Gly-tRNA(Ala) via its editing domain. The sequence is that of Alanine--tRNA ligase from Chlorobium chlorochromatii (strain CaD3).